The sequence spans 432 residues: Tol-Pal system protein TolB (432 aa).

An N-terminal signal peptide occupies residues 1-22; that stretch reads MMFKKCLSVLFTCLIFISSARA.

The protein belongs to the TolB family. As to quaternary structure, the Tol-Pal system is composed of five core proteins: the inner membrane proteins TolA, TolQ and TolR, the periplasmic protein TolB and the outer membrane protein Pal. They form a network linking the inner and outer membranes and the peptidoglycan layer.

It localises to the periplasm. Part of the Tol-Pal system, which plays a role in outer membrane invagination during cell division and is important for maintaining outer membrane integrity. This is Tol-Pal system protein TolB from Marinomonas sp. (strain MWYL1).